Here is a 379-residue protein sequence, read N- to C-terminus: Glutamate 5-kinase (379 aa).

Lysine 15 serves as a coordination point for ATP. The substrate site is built by serine 54, aspartate 144, and asparagine 156. Position 176–177 (176–177) interacts with ATP; it reads TD. Residues 282 to 360 enclose the PUA domain; that stretch reads KGVILVDAGA…GEIERALGYK (79 aa).

Belongs to the glutamate 5-kinase family.

It localises to the cytoplasm. It carries out the reaction L-glutamate + ATP = L-glutamyl 5-phosphate + ADP. It functions in the pathway amino-acid biosynthesis; L-proline biosynthesis; L-glutamate 5-semialdehyde from L-glutamate: step 1/2. Its function is as follows. Catalyzes the transfer of a phosphate group to glutamate to form L-glutamate 5-phosphate. The protein is Glutamate 5-kinase of Anaeromyxobacter dehalogenans (strain 2CP-C).